Here is a 478-residue protein sequence, read N- to C-terminus: MSNGAPFPLDYRGTRNYGPRFIPDRYSTFVSSARKSPRTPPGGSDQVVHVNDAGVYKRTFAVASPFPKSEFFYSSVGVGDAIGAMTDTKKHRVRRSILGPRLRAKAIAPYTPSLQKLVIACMDIMAGKARQGKVINLLRYTRALTVDVISDFTFGRPMGVVNEAEEMPDLLNDLEVFGRHFHILKHFPISRKLLDIIPESFARKLMPLPGFFELREKATTAVNEAVVERQAGKTISNNTDGASFLDLLLNQIDENPSVLVDEGCAFITGGSDTTGFTMENATYLILSHPHILQSLLQELDTSPHIRDTFDLDHILRLPFLTAIIKETLRLYTPAPSPLPRTVPAEGIDVHGHFLPGGTILTHSLYLIHHNPVLFADPKSFKPERWLGTQGKVLEQYYVPFSKGSRSCIGMALAYHEVYTYLSLLFSRFEMEIFETSQSDMDWREHFFVKRNGQLRIRIVRDRWTGEAFPTRAVEADLR.

C407 lines the heme pocket.

The protein belongs to the cytochrome P450 family. The cofactor is heme.

It functions in the pathway secondary metabolite biosynthesis. It participates in alkaloid biosynthesis. The protein operates within mycotoxin biosynthesis. Cytochrome P450 monooxygenase; part of the gene cluster that mediates the biosynthesis of the aspoquinolone mycotoxins. The role of asqL within the aspoquinolone pathway has still to be determined. The first step of the pathway is catalyzed by the nonribosomal peptide synthetase asqK that condenses anthranilic acid and O-methyl-L-tyrosine to produce 4'-methoxycyclopeptin. 4'-methoxycyclopeptin is then converted to 4'-methoxydehydrocyclopeptin by the ketoglutarate-dependent dioxygenase asqJ. AsqJ also converts its first product 4'-methoxydehydrocyclopeptin to 4'-methoxycyclopenin. The following conversion of 4'-methoxycyclopenin into 4'-methoxyviridicatin is catalyzed by the cyclopenase asqI. 4'-methoxyviridicatin is the precursor of quinolone natural products, and is further converted to quinolinone B. The prenyltransferase asqH1 then catalyzes the canonical Friedel-Crafts alkylation of quinolinone B with dimethylallyl cation to yield dimethylallyl quinolone, which is subjected to FAD-dependent dehydrogenation by the FAD-linked oxidoreductase asqF to yield conjugated aryl diene. The delta(3') double bond then serves as the site of the second alkylation with DMAPP catalyzed by the prenyltransferase asqH2 to yield a carbenium ion intermediate, which can be attacked by H(2)O to yield a styrenyl quinolone containing a C3'-hydroxyprenyl chain. The FAD-dependent monooxygenase asqG performs epoxidation of the terminal C7'-C8' olefin. Finally, after dehydratation of the epoxide at C3 by asqC, the quinolone epoxide rearrangement protein asqO catalyzes an enzymatic 3-exo-tet cyclization to yield the cyclopropyl-THF ring system in aspoquinolone. In Emericella nidulans (strain FGSC A4 / ATCC 38163 / CBS 112.46 / NRRL 194 / M139) (Aspergillus nidulans), this protein is Cytochrome P450 monooxygenase asqL.